Reading from the N-terminus, the 538-residue chain is Guanine nucleotide-binding protein-like 3 (538 aa).

Over residues 1–45 (MKRPKLKKASKRMTCHKRYKIQKKVREHHRKLRKEAKKRGHKKPK) the composition is skewed to basic residues. Residues 1-125 (MKRPKLKKAS…KAKSGKQNPK (125 aa)) are disordered. The basic stretch occupies residues 2–46 (KRPKLKKASKRMTCHKRYKIQKKVREHHRKLRKEAKKRGHKKPKK). The stretch at 54–95 (APFKEALLREAELRKQQLEELKQQQKLDRQKEQERKRKLEIS) forms a coiled coil. Over residues 59 to 94 (ALLREAELRKQQLEELKQQQKLDRQKEQERKRKLEI) the composition is skewed to basic and acidic residues. Position 79 is an N6-acetyllysine (Lys79). Lys91 participates in a covalent cross-link: Glycyl lysine isopeptide (Lys-Gly) (interchain with G-Cter in SUMO2). Residues Ser95 and Ser101 each carry the phosphoserine modification. Acidic residues predominate over residues 95–110 (SPDDEQSNVETQEESD). Basic residues predominate over residues 115–125 (KKAKSGKQNPK). The CP-type G domain occupies 129-307 (CQELKKVIEA…IIDSPCFIIS (179 aa)). 176–179 (NKSD) is a GTP binding site. Residues Lys177, Lys248, Lys262, and Lys270 each participate in a glycyl lysine isopeptide (Lys-Gly) (interchain with G-Cter in SUMO2) cross-link. 256 to 263 (GFPNVGKS) contacts GTP. The intermediate stretch occupies residues 277–451 (VGVSMGLTRS…HLTNKILFRS (175 aa)). 300–303 (DSPC) is a binding site for GTP. 2 stretches are compositionally biased toward basic and acidic residues: residues 460 to 473 (EEKD…KQTE) and 481 to 491 (QEHVTGEKNAE). Positions 460-532 (EEKDIPEESP…KMSEEDDAYD (73 aa)) are acidic. The disordered stretch occupies residues 460–538 (EEKDIPEESP…DAYDFTTDYI (79 aa)). A phosphoserine mark is found at Ser493, Ser505, and Ser518. The span at 514 to 524 (PSDRSFILDKM) shows a compositional bias: basic and acidic residues.

It belongs to the TRAFAC class YlqF/YawG GTPase family. In terms of assembly, interacts with MDM2; this interaction stabilizes MDM2. Interaction with MDM2 occurs in the nucleoplasm and is triggered by a nucleolar release mechanism, such as mitosis-induced nucleolar disassembly. May interact with p53/TP53 via its basic domain. This interaction is most probably indirect and mediated by MDM2-binding. Expressed in testis.

The protein localises to the nucleus. It localises to the nucleolus. In terms of biological role, may be required to maintain the proliferative capacity of stem cells. Stabilizes MDM2 by preventing its ubiquitination, and hence proteasomal degradation. The chain is Guanine nucleotide-binding protein-like 3 (Gnl3) from Rattus norvegicus (Rat).